A 312-amino-acid chain; its full sequence is MNSADTQEPKSFNHTDMWTAFGTTMSGALETDPRAVVVLADIGAHLFKAAAIADPNRVINVGIREQLMMGVAGGLAMCGMRPVVHTVAAFLVERPLEQIKLNFAQQDVGAVLVSWGASYDLSEFAFSHFTPGDITVIDSMPNWTVHVPGHPQEAADLLLESLPGDGRVYLRLSSQVNRYPHAVRGTSFTPIKYGTRGVVLAVGPCLDAVLSATSMLDVTILYAATIRPFDATGLCAAVQAVNRPNVVLVEPYLAGTSAHQVSSSLVSHPHRLLSLGVRREMEDRHYGTPDDHDHIHGLDARSLSNSINSFLG.

The first 28 residues, 1-28, serve as a signal peptide directing secretion; it reads MNSADTQEPKSFNHTDMWTAFGTTMSGA.

Functionally, the FAS-operon encodes genes involved in cytokinin production and in host plant fasciation (leafy gall). This is an uncharacterized protein from Rhodococcoides fascians (Rhodococcus fascians).